We begin with the raw amino-acid sequence, 770 residues long: Transducin-like enhancer protein 1 (770 aa).

The tract at residues 1–131 is q domain; that stretch reads MFPQSRHPTP…IIGQQQLQAQ (131 aa). Disordered stretches follow at residues 128–157 and 176–346; these read LQAQ…GIPP and HLAI…PAME. The tract at residues 132-199 is GP domain; sequence HLSHGHGPPV…RHRDRESGTS (68 aa). The segment covering 146–157 has biased composition (low complexity); the sequence is HPSGLQPPGIPP. 2 stretches are compositionally biased toward basic and acidic residues: residues 178 to 196 and 209 to 244; these read AIKD…DRES and RSTD…KSDD. Positions 200–266 are ccN domain; that stretch reads NSLLVPDSLR…SPHASPTHSP (67 aa). The Nuclear localization signal motif lies at 225–228; that stretch reads KKRK. Position 237 is a phosphoserine; by CK2 (Ser237). Residues 255 to 264 are compositionally biased toward low complexity; it reads PSSPHASPTH. A phosphoserine; by CDK1 mark is found at Ser257, Ser261, and Ser265. The segment covering 265–281 has biased composition (basic and acidic residues); sequence SPRENGIDKNRLLKKDA. Residues 267-450 form an SP domain region; it reads RENGIDKNRL…GGKPAYSFHV (184 aa). A compositionally biased stretch (low complexity) spans 282–297; it reads SGSPASTASSGSSSSL. Ser284 bears the Phosphoserine mark. Positions 298 to 308 are enriched in basic and acidic residues; sequence KSKEVSLHEKA. 6 WD repeats span residues 470 to 501, 528 to 558, 572 to 602, 614 to 644, 696 to 726, and 737 to 767; these read GIPR…HVYT, NRDN…SIWD, SSAP…AVWD, GHTD…RSWD, LHES…NAWR, and KESS…TVYE.

This sequence belongs to the WD repeat Groucho/TLE family. As to quaternary structure, homooligomer and heterooligomer with other family members. Binds RUNX1, RUNX3, FOXA2, KDM6A, UTY, histone H3, HESX1, ESRRG and the NF-kappa-B subunit RELA. Interacts with HES1 (via WRPW motif). Binds TCF7, LEF1, TCF7L1 and TCF7L2. Interacts with SIX3. Interacts with EFNB1. Interacts with TLE4. Interacts with FOXG1/BF-1; the interaction is inhibited by TLE6/GRG6. Phosphorylated, probably by CDK1. The degree of phosphorylation varies throughout the cell cycle, and is highest at the G2/M transition. Becomes hyperphosphorylated in response to cell differentiation and interaction with HES1 or RUNX1. Post-translationally, ubiquitinated by XIAP/BIRC4. As to expression, highly expressed in liver and lung. Detected at slightly lower levels in heart, brain, kidney and testis. Detected in fetal and adult stomach and small intestine, in adult ileum, duodenum and colon. Expressed in bone marrow-derived macrophages. Most abundant at the base of the crypts of Lieberkuhn in the small intestine.

The protein resides in the nucleus. Its subcellular location is the cytoplasm. Transcriptional corepressor that binds to a number of transcription factors. Inhibits NF-kappa-B-regulated gene expression. Inhibits the transcriptional activation mediated by FOXA2, and by CTNNB1 and TCF family members in Wnt signaling. Enhances FOXG1/BF-1- and HES1-mediated transcriptional repression. The effects of full-length TLE family members may be modulated by association with dominant-negative AES. Unusual function as coactivator for ESRRG. This chain is Transducin-like enhancer protein 1 (Tle1), found in Mus musculus (Mouse).